Consider the following 209-residue polypeptide: Thymidine kinase (209 aa).

ATP is bound by residues 9-16 (AAMNAGKS) and 88-91 (DEAQ). Glu-89 functions as the Proton acceptor in the catalytic mechanism. Zn(2+)-binding residues include Cys-146, Cys-148, Cys-183, and His-186.

This sequence belongs to the thymidine kinase family. Homotetramer.

Its subcellular location is the cytoplasm. The catalysed reaction is thymidine + ATP = dTMP + ADP + H(+). This Legionella pneumophila (strain Lens) protein is Thymidine kinase.